We begin with the raw amino-acid sequence, 1499 residues long: Multidrug resistance protein CDR2 (1499 aa).

Over 1–511 the chain is Cytoplasmic; that stretch reads MSTANTSLSQ…NFLRMKGDPS (511 aa). One can recognise an ABC transporter 1 domain in the interval 148–402; sequence FTTEAINKLK…FENMGWKCPQ (255 aa). Helical transmembrane passes span 512–532, 546–566, 596–616, 621–641, 660–680, and 763–783; these read IPLISILSQLVMGLILASVFF, GALFFSVLFNAFSSLLEILSL, LPVKLLMTMSFNIVYYFMVNL, GNFFFYWLMCASCTLVMSHMF, VFLLAMIIYAGFVLPIPYILG, and FGITVAFAVFFLGVYVALTEF. Residues 784 to 1193 lie on the Cytoplasmic side of the membrane; the sequence is NKGAMQKGEI…TIVQDWRSPG (410 aa). Residues 857-1101 form the ABC transporter 2 domain; the sequence is FFWRDLTYQV…MINYFEKYGA (245 aa). Residue 893-900 coordinates ATP; sequence GASGAGKT. Transmembrane regions (helical) follow at residues 1194-1214, 1229-1249, 1279-1299, 1315-1335, 1354-1374, and 1465-1485; these read YIYSKLILVISSSLFIGFSFF, AVFMFFVPFTTFIDQMLPYFV, IPFQIVVGTISYFCWYYPVGL, LMWMLLTAFYVYTSTMGQLAI, LCLMFCGVLAGPNVIPGFWIF, and FGIFVAFIGINIILTIFFYWL.

Belongs to the ABC transporter superfamily. ABCG family. PDR (TC 3.A.1.205) subfamily.

It localises to the membrane. Functionally, multidrug efflux transporter. Confers resistance to azole antifungal agents, to other antifungals (terbinafine, amorolfine) and to a variety of metabolic inhibitors. The protein is Multidrug resistance protein CDR2 (CDR2) of Candida albicans (strain SC5314 / ATCC MYA-2876) (Yeast).